Reading from the N-terminus, the 441-residue chain is MPTMTPAFSRASLSEALRSYGLALLLFLATLLAWQPAHAQLRVDISGTGATQYPIAIADFAGDDVRGRALAEVIRADLTRTGQFRLINAAGSGLTVDSPINYDDWRGRGADYVAYGSISQGADGRFEIRYRLADTVKKNQLDGVAFSGTEPELRRIAHQIADRIYEKITGVRGVFATRIAYVLKQGNTYELQVADADGQNPQVALRSREPIISPTWSPDGSKLAYVSFHSGKPVVYVQTLATRSQIPVANFKGNNSAPAWSPDGSQLAVALTQDGLSQIYIVSADGSAKPRRITRSPGIDTEPTFTPDGRSIIFTSDRSGGPQIYQVGLDGGDARRLTFNGSYNISPRISPDGSTLLYVARRDGAFRIASLNLPTGTETLLTDGRDDQSPSFAPNGMQVLYAATQNGRSVLAGVSSDGRVRQTLSVLNGEIREPTWGPFTR.

A signal peptide spans 1 to 39 (MPTMTPAFSRASLSEALRSYGLALLLFLATLLAWQPAHA).

This sequence belongs to the TolB family. In terms of assembly, the Tol-Pal system is composed of five core proteins: the inner membrane proteins TolA, TolQ and TolR, the periplasmic protein TolB and the outer membrane protein Pal. They form a network linking the inner and outer membranes and the peptidoglycan layer.

It is found in the periplasm. Its function is as follows. Part of the Tol-Pal system, which plays a role in outer membrane invagination during cell division and is important for maintaining outer membrane integrity. The polypeptide is Tol-Pal system protein TolB (Bordetella avium (strain 197N)).